We begin with the raw amino-acid sequence, 726 residues long: Catalase-peroxidase (726 aa).

The span at 1–13 shows a compositional bias: polar residues; sequence MSMSEETNNSLSS. Residues 1–34 form a disordered region; that stretch reads MSMSEETNNSLSSGKCPFHHGGSDQSAGEGTGSR. Positions 105-226 form a cross-link, tryptophyl-tyrosyl-methioninium (Trp-Tyr) (with M-252); sequence WHGAGTYRSV…LAATEMGLIY (122 aa). The active-site Proton acceptor is the His106. The segment at residues 226-252 is a cross-link (tryptophyl-tyrosyl-methioninium (Tyr-Met) (with W-105)); sequence YVNPEGPNASGEPLSAAAAIRATFGNM. Heme b is bound at residue His267.

It belongs to the peroxidase family. Peroxidase/catalase subfamily. As to quaternary structure, homodimer or homotetramer. Heme b is required as a cofactor. Formation of the three residue Trp-Tyr-Met cross-link is important for the catalase, but not the peroxidase activity of the enzyme.

It catalyses the reaction H2O2 + AH2 = A + 2 H2O. The enzyme catalyses 2 H2O2 = O2 + 2 H2O. Functionally, bifunctional enzyme with both catalase and broad-spectrum peroxidase activity. The protein is Catalase-peroxidase of Enterobacter sp. (strain 638).